Reading from the N-terminus, the 201-residue chain is uncharacterized protein (201 aa).

2 coiled-coil regions span residues Tyr3–Lys43 and Thr76–Lys120.

This is an uncharacterized protein from Archaeoglobus fulgidus (strain ATCC 49558 / DSM 4304 / JCM 9628 / NBRC 100126 / VC-16).